The following is a 461-amino-acid chain: Argininosuccinate lyase (461 aa).

The protein belongs to the lyase 1 family. Argininosuccinate lyase subfamily.

Its subcellular location is the cytoplasm. The enzyme catalyses 2-(N(omega)-L-arginino)succinate = fumarate + L-arginine. The protein operates within amino-acid biosynthesis; L-arginine biosynthesis; L-arginine from L-ornithine and carbamoyl phosphate: step 3/3. This is Argininosuccinate lyase from Clostridium beijerinckii (strain ATCC 51743 / NCIMB 8052) (Clostridium acetobutylicum).